The following is a 512-amino-acid chain: Polyamine aminopropyltransferase (512 aa).

7 helical membrane passes run 19-39 (IVSI…SYIL), 48-68 (LTIS…EKFM), 76-96 (VWIE…MFGI), 108-128 (YLYS…PILI), 151-171 (AGGL…FGMV), 172-192 (KTAF…LWLF), and 199-219 (FIVH…GLFF). The region spanning 215–450 (AGLFFGEEMA…GNWGFVMASR (236 aa)) is the PABS domain. Residues 217 to 457 (LFFGEEMAFN…ASREEIDLDI (241 aa)) are spermidine synthase. Gln245 is an S-methyl-5'-thioadenosine binding site. Spermidine-binding residues include His275 and Asp299. Residues Asp319 and 353 to 354 (DA) contribute to the S-methyl-5'-thioadenosine site. Asp371 serves as the catalytic Proton acceptor.

This sequence belongs to the spermidine/spermine synthase family. As to quaternary structure, homodimer or homotetramer.

It is found in the cell membrane. The catalysed reaction is S-adenosyl 3-(methylsulfanyl)propylamine + putrescine = S-methyl-5'-thioadenosine + spermidine + H(+). Its pathway is amine and polyamine biosynthesis; spermidine biosynthesis; spermidine from putrescine: step 1/1. Functionally, catalyzes the irreversible transfer of a propylamine group from the amino donor S-adenosylmethioninamine (decarboxy-AdoMet) to putrescine (1,4-diaminobutane) to yield spermidine. The sequence is that of Polyamine aminopropyltransferase from Oceanobacillus iheyensis (strain DSM 14371 / CIP 107618 / JCM 11309 / KCTC 3954 / HTE831).